A 115-amino-acid chain; its full sequence is C-type natriuretic peptide prohormone (115 aa).

Residues 24-49 (PSDELNNEAEEMSPAASLPELNADQS) form a disordered region. Cys99 and Cys115 are oxidised to a cystine.

Belongs to the natriuretic peptide family. As to expression, CNP-115 is differentially processed to produce CNP-38 and CNP-39 in the heart and CNP-22 in the brain.

Its subcellular location is the secreted. Functionally, hormone which may be vasoactive and natriuretic. Has a cGMP-stimulating activity. This chain is C-type natriuretic peptide prohormone, found in Scyliorhinus canicula (Small-spotted catshark).